Reading from the N-terminus, the 331-residue chain is E3 ubiquitin-protein ligase Siah2 (331 aa).

The interval 1 to 26 (MSRPSSAGGAAGGLGAGKAGGSKHGG) is disordered. Positions 9 to 26 (GAAGGLGAGKAGGSKHGG) are enriched in gly residues. The RING-type zinc finger occupies 89 to 124 (CPVCFDYVLPPILQCQAGHLVCNQCRQKLSCCPTCR). Positions 139 to 331 (VASTLPFPCK…LGINVTISMC (193 aa)) are SBD. Residues 142–202 (TLPFPCKYSS…VMPHLMHAHK (61 aa)) form an SIAH-type zinc finger. Cys-147, Cys-154, His-166, Cys-170, Cys-177, Cys-184, His-196, and His-201 together coordinate Zn(2+).

This sequence belongs to the SINA (Seven in absentia) family. Homodimer. In terms of tissue distribution, in embryos it is expressed in all blastomeres starting at the mid-blastulla. After 20 somite stage, it is expressed mainly in the posterior part. Expressed in brain, including the eye, the cranial cavity, otic vesicle, optic chiasm and in the gut.

The catalysed reaction is S-ubiquitinyl-[E2 ubiquitin-conjugating enzyme]-L-cysteine + [acceptor protein]-L-lysine = [E2 ubiquitin-conjugating enzyme]-L-cysteine + N(6)-ubiquitinyl-[acceptor protein]-L-lysine.. It functions in the pathway protein modification; protein ubiquitination. In terms of biological role, E3 ubiquitin-protein ligase that mediates ubiquitination and subsequent proteasomal degradation of target proteins. E3 ubiquitin ligases accept ubiquitin from an E2 ubiquitin-conjugating enzyme in the form of a thioester and then directly transfers the ubiquitin to targeted substrates. It probably triggers the ubiquitin-mediated degradation of different substrates. Induces cellular growth arrest by inhibiting the G2/M transition. May play a role in the regulation of the cellular clock function. The polypeptide is E3 ubiquitin-protein ligase Siah2 (siah2l) (Danio rerio (Zebrafish)).